Reading from the N-terminus, the 102-residue chain is UPF0213 protein XAC3202 (102 aa).

The GIY-YIG domain maps to 5–80 (KPWHLYLLLC…KRLPRARKLA (76 aa)).

The protein belongs to the UPF0213 family.

This Xanthomonas axonopodis pv. citri (strain 306) protein is UPF0213 protein XAC3202.